Here is a 201-residue protein sequence, read N- to C-terminus: Recombination protein RecR (201 aa).

The segment at 60-75 (CSCCGNVDTIDPCTVC) adopts a C4-type zinc-finger fold. The Toprim domain occupies 83 to 178 (AVIIVVEDVA…RITRLAHGVP (96 aa)).

It belongs to the RecR family.

Its function is as follows. May play a role in DNA repair. It seems to be involved in an RecBC-independent recombinational process of DNA repair. It may act with RecF and RecO. This Sinorhizobium medicae (strain WSM419) (Ensifer medicae) protein is Recombination protein RecR.